A 671-amino-acid chain; its full sequence is Probable boron transporter 6 (671 aa).

Over 1-37 (MKSEGESGPFQGILRDIEGRRKCYKQDWIRGIKTGIR) the chain is Cytoplasmic. A helical transmembrane segment spans residues 38–58 (ILAPTCYIFFASSLPVVAFGE). The Extracellular portion of the chain corresponds to 59–77 (QLSKHTGGALSAVETLAST). Residues 78 to 98 (SICGIIHAIFGGQPLLIVGVA) traverse the membrane as a helical segment. At 99-123 (EPTIIMYTYLYSFCISRPDIGRELY) the chain is on the cytoplasmic side. The helical transmembrane segment at 124–144 (LAWVAWVCVWTSVLLILLSIF) threads the bilayer. Topologically, residues 145–157 (NAGTIITRFTRIA) are extracellular. The chain crosses the membrane as a helical span at residues 158 to 178 (GELFGMLIAVLFLQEAIKGLI). The Cytoplasmic segment spans residues 179–195 (SEFHAPEIKNQETGKSH). Residues 196 to 216 (FLLIYANGLLAVIFSLGLLIT) traverse the membrane as a helical segment. Residues 217 to 235 (ALKSRRAKSWKYGFGWLRS) are Extracellular-facing. A helical membrane pass occupies residues 236–256 (FIGDYGVPLMVLLWTALSYTV). The Cytoplasmic portion of the chain corresponds to 257–291 (PSEVLPSVPRRLFCPLPWEPASLYHWTVVKDMGKV). A helical transmembrane segment spans residues 292–312 (PIMYILAAFIPGVMIAGLYFF). The Extracellular portion of the chain corresponds to 313 to 332 (DHSVASQMAQQKEFNLKNPS). A helical membrane pass occupies residues 333 to 353 (AYHYDIFLLGIITLICGLLGL). Residues 354–469 (PPSNGVLPQA…EQRVSNLLQS (116 aa)) lie on the Cytoplasmic side of the membrane. A helical membrane pass occupies residues 470 to 490 (VLVGLTLLAVTVIKMIPSSVL). Residues 491–557 (WGYFAYMAID…QLVYFLLCYG (67 aa)) are Extracellular-facing. Residues 558–578 (MTWIPMAGIFFPALFFLLISI) form a helical membrane-spanning segment. Residues 579–671 (REHLLPKLFD…EEKHVTFEPH (93 aa)) lie on the Cytoplasmic side of the membrane.

It belongs to the anion exchanger (TC 2.A.31.3) family.

It localises to the membrane. Functionally, probable boron transporter. Boron is essential for maintaining the integrity of plants cell walls. This is Probable boron transporter 6 (BOR6) from Arabidopsis thaliana (Mouse-ear cress).